Here is a 407-residue protein sequence, read N- to C-terminus: Serine/threonine-protein kinase GRIK2 (407 aa).

Residues 21–64 (SGSRNQQSPKPYDDDTHSCDSDVTSTARGEEEEDEEEVEQKSRS) are disordered. Positions 31–40 (PYDDDTHSCD) are enriched in basic and acidic residues. Residues 107–370 (YVRVCKIGSG…LKNVSEHPWV (264 aa)) form the Protein kinase domain. ATP is bound by residues 113–121 (IGSGSYGKV) and Lys-136. At Thr-153 the chain carries Phosphothreonine; by autocatalysis. The active-site Proton acceptor is Asp-238. Ser-260 carries the post-translational modification Phosphoserine; by KIN10.

This sequence belongs to the protein kinase superfamily. Ser/Thr protein kinase family. Associates with the SNF1-related protein kinase (SnRK) complex. Interacts with AL1, a geminivirus (TGMV) protein essential for viral replication. In terms of tissue distribution, expressed in shoot apical meristem, leaf primordium and emerging petiole (at protein level).

The enzyme catalyses L-seryl-[protein] + ATP = O-phospho-L-seryl-[protein] + ADP + H(+). It catalyses the reaction L-threonyl-[protein] + ATP = O-phospho-L-threonyl-[protein] + ADP + H(+). With respect to regulation, activated when autophosphorylated at Thr-153 and inactivated when phosphorylated at Ser-260 by SnRK1.1/KIN10. Its function is as follows. Activates SnRK1.1/KIN10 and SnRK1.2/KIN11 by phosphorylation of their activation-loop 'Thr-198' and 'Thr-176', respectively. Required for the regulation by SnRK1 kinases of the transcription of a large set of genes, the modification the activity of metabolic enzymes, and the control of various nutrient-responsive cellular developmental processes. This Arabidopsis thaliana (Mouse-ear cress) protein is Serine/threonine-protein kinase GRIK2 (GRIK2).